The following is a 437-amino-acid chain: Exosome complex component RRP45 (437 aa).

Serine 65 carries the phosphoserine modification. The residue at position 297 (lysine 297) is an N6-acetyllysine; alternate. Residue lysine 297 forms a Glycyl lysine isopeptide (Lys-Gly) (interchain with G-Cter in SUMO1); alternate linkage. Residue lysine 297 forms a Glycyl lysine isopeptide (Lys-Gly) (interchain with G-Cter in SUMO2); alternate linkage. 2 positions are modified to phosphoserine: serine 306 and serine 346. The segment at isoleucine 339–asparagine 437 is disordered. Residues aspartate 349–isoleucine 363 show a composition bias toward acidic residues. Phosphoserine is present on residues serine 392, serine 394, and serine 407. The span at alanine 413 to serine 425 shows a compositional bias: polar residues. The segment covering glutamine 426–asparagine 437 has biased composition (basic residues).

It belongs to the RNase PH family. Component of the RNA exosome core complex (Exo-9), composed of EXOSC1, EXOSC2, EXOSC3, EXOSC4, EXOSC5, EXOSC6, EXOSC7, EXOSC8 and EXOSC9; within the complex interacts with EXOSC3, EXOSC4, EXOSC5 and DIS3. The catalytically inactive RNA exosome core complex (Exo-9) associates with the catalytic subunit EXOSC10/RRP6. Exo-9 may associate with DIS3 to form the nucleolar exosome complex, or DIS3L to form the cytoplasmic exosome complex. Exo-9 is formed by a hexameric base ring consisting of the heterodimers EXOSC4-EXOSC9, EXOSC5-EXOSC8 and EXOSC6-EXOSC7, and a cap ring consisting of EXOSC1, EXOSC2 and EXOSC3. The RNA exosome complex associates with cofactors C1D/RRP47, MPHOSPH6/MPP6 and MTREX/MTR4. Interacts (via C-terminus region) with SETX (via N-terminus domain); the interaction enhances SETX sumoylation. Interacts with DIS3; the interaction is direct.

It is found in the cytoplasm. Its subcellular location is the nucleus. The protein resides in the nucleolus. The protein localises to the nucleoplasm. In terms of biological role, non-catalytic component of the RNA exosome complex which has 3'-&gt;5' exoribonuclease activity and participates in a multitude of cellular RNA processing and degradation events. In the nucleus, the RNA exosome complex is involved in proper maturation of stable RNA species such as rRNA, snRNA and snoRNA, in the elimination of RNA processing by-products and non-coding 'pervasive' transcripts, such as antisense RNA species and promoter-upstream transcripts (PROMPTs), and of mRNAs with processing defects, thereby limiting or excluding their export to the cytoplasm. The RNA exosome may be involved in Ig class switch recombination (CSR) and/or Ig variable region somatic hypermutation (SHM) by targeting AICDA deamination activity to transcribed dsDNA substrates. In the cytoplasm, the RNA exosome complex is involved in general mRNA turnover and specifically degrades inherently unstable mRNAs containing AU-rich elements (AREs) within their 3' untranslated regions, and in RNA surveillance pathways, preventing translation of aberrant mRNAs. It seems to be involved in degradation of histone mRNA. The catalytic inactive RNA exosome core complex of 9 subunits (Exo-9) is proposed to play a pivotal role in the binding and presentation of RNA for ribonucleolysis, and to serve as a scaffold for the association with catalytic subunits and accessory proteins or complexes. EXOSC9 binds to ARE-containing RNAs. In Rattus norvegicus (Rat), this protein is Exosome complex component RRP45 (Exosc9).